We begin with the raw amino-acid sequence, 852 residues long: Lon protease homolog 2, peroxisomal (852 aa).

An N-acetylserine modification is found at Ser2. In terms of domain architecture, Lon N-terminal spans 13-222 (LPLLLTHEGV…MTIPLLVRQI (210 aa)). 375–382 (GPPGVGKT) serves as a coordination point for ATP. Positions 651-837 (LSQPGVAIGL…DEVLNAAFDG (187 aa)) constitute a Lon proteolytic domain. Catalysis depends on residues Ser743 and Lys786. The short motif at 850–852 (SKL) is the Microbody targeting signal element.

The protein belongs to the peptidase S16 family. In terms of assembly, interacts with PEX5. Interacts with TYSND1. May interact with enzymes involved in beta-oxidation of fatty acids, including ACOX1/AOX.

It localises to the peroxisome matrix. It carries out the reaction Hydrolysis of proteins in presence of ATP.. ATP-dependent serine protease that mediates the selective degradation of misfolded and unassembled polypeptides in the peroxisomal matrix. Necessary for type 2 peroxisome targeting signal (PTS2)-containing protein processing and facilitates peroxisome matrix protein import. May indirectly regulate peroxisomal fatty acid beta-oxidation through degradation of the self-processed forms of TYSND1. The polypeptide is Lon protease homolog 2, peroxisomal (Pongo abelii (Sumatran orangutan)).